A 216-amino-acid polypeptide reads, in one-letter code: Pyrophosphatase PpaX (216 aa).

The active-site Nucleophile is the Asp12.

This sequence belongs to the HAD-like hydrolase superfamily. PpaX family. The cofactor is Mg(2+).

It carries out the reaction diphosphate + H2O = 2 phosphate + H(+). In terms of biological role, hydrolyzes pyrophosphate formed during P-Ser-HPr dephosphorylation by HPrK/P. Might play a role in controlling the intracellular pyrophosphate pool. The protein is Pyrophosphatase PpaX of Bacillus pumilus (strain SAFR-032).